Reading from the N-terminus, the 360-residue chain is Phenylalanine--tRNA ligase alpha subunit (360 aa).

Glu-260 lines the Mg(2+) pocket.

The protein belongs to the class-II aminoacyl-tRNA synthetase family. Phe-tRNA synthetase alpha subunit type 1 subfamily. Tetramer of two alpha and two beta subunits. It depends on Mg(2+) as a cofactor.

It is found in the cytoplasm. The catalysed reaction is tRNA(Phe) + L-phenylalanine + ATP = L-phenylalanyl-tRNA(Phe) + AMP + diphosphate + H(+). The polypeptide is Phenylalanine--tRNA ligase alpha subunit (Bradyrhizobium sp. (strain BTAi1 / ATCC BAA-1182)).